The primary structure comprises 184 residues: ATP synthase subunit b, chloroplastic (184 aa).

The chain crosses the membrane as a helical span at residues 29-49 (INIINLGIVIGLLVYLGEGVL).

It belongs to the ATPase B chain family. As to quaternary structure, F-type ATPases have 2 components, F(1) - the catalytic core - and F(0) - the membrane proton channel. F(1) has five subunits: alpha(3), beta(3), gamma(1), delta(1), epsilon(1). F(0) has four main subunits: a(1), b(1), b'(1) and c(10-14). The alpha and beta chains form an alternating ring which encloses part of the gamma chain. F(1) is attached to F(0) by a central stalk formed by the gamma and epsilon chains, while a peripheral stalk is formed by the delta, b and b' chains.

The protein resides in the plastid. Its subcellular location is the chloroplast thylakoid membrane. Its function is as follows. F(1)F(0) ATP synthase produces ATP from ADP in the presence of a proton or sodium gradient. F-type ATPases consist of two structural domains, F(1) containing the extramembraneous catalytic core and F(0) containing the membrane proton channel, linked together by a central stalk and a peripheral stalk. During catalysis, ATP synthesis in the catalytic domain of F(1) is coupled via a rotary mechanism of the central stalk subunits to proton translocation. Component of the F(0) channel, it forms part of the peripheral stalk, linking F(1) to F(0). This Psilotum nudum (Whisk fern) protein is ATP synthase subunit b, chloroplastic.